The chain runs to 701 residues: Methionine--tRNA ligase (701 aa).

Residues 13–23 (PYANGSIHLGH) carry the 'HIGH' region motif. Zn(2+)-binding residues include cysteine 144, cysteine 147, cysteine 157, and cysteine 160. A 'KMSKS' region motif is present at residues 336–340 (KMSKS). ATP is bound at residue lysine 339. A tRNA-binding domain is found at 600-701 (DFSKIDLRIA…SGAQPGMRVK (102 aa)).

The protein belongs to the class-I aminoacyl-tRNA synthetase family. MetG type 1 subfamily. Homodimer. Zn(2+) serves as cofactor.

The protein resides in the cytoplasm. It catalyses the reaction tRNA(Met) + L-methionine + ATP = L-methionyl-tRNA(Met) + AMP + diphosphate. Is required not only for elongation of protein synthesis but also for the initiation of all mRNA translation through initiator tRNA(fMet) aminoacylation. In Nitrosomonas eutropha (strain DSM 101675 / C91 / Nm57), this protein is Methionine--tRNA ligase.